Reading from the N-terminus, the 144-residue chain is Large ribosomal subunit protein uL13 (144 aa).

Belongs to the universal ribosomal protein uL13 family. In terms of assembly, part of the 50S ribosomal subunit.

Its function is as follows. This protein is one of the early assembly proteins of the 50S ribosomal subunit, although it is not seen to bind rRNA by itself. It is important during the early stages of 50S assembly. The chain is Large ribosomal subunit protein uL13 from Mesomycoplasma hyopneumoniae (strain 7448) (Mycoplasma hyopneumoniae).